A 59-amino-acid polypeptide reads, in one-letter code: Antitoxin RelB4 (59 aa).

The segment at V38–K59 is disordered. A compositionally biased stretch (pro residues) spans Q50–K59.

Functionally, antitoxin component of a type II toxin-antitoxin (TA) system. Neutralizes the effect of cognate toxin RelE4, but no other RelE or ParE toxin. The sequence is that of Antitoxin RelB4 (relB4) from Caulobacter vibrioides (strain ATCC 19089 / CIP 103742 / CB 15) (Caulobacter crescentus).